The primary structure comprises 225 residues: Cardiotrophin-like cytokine factor 1 (225 aa).

An N-terminal signal peptide occupies residues 1 to 27 (MDLRAGDSWGMLACLCTVLWHLPAVPA). A glycan (N-linked (GlcNAc...) asparagine) is linked at Asn29.

It belongs to the IL-6 superfamily. In terms of assembly, forms a heteromeric complex with cardiotrophin-like cytokine CRLF1/CLF-1; the CRLF1-CLCF1 complex is a ligand for the ciliary neurotrophic factor receptor/CNTFR. The CRLF1-CLCF1 heterodimer binds SORL1 (via N-terminal ectodomain); within this complex, the interaction is mediated predominantly by the CRLF1 moiety. The tripartite signaling complex formed by CRLF1, CLCF1 and CNTFR also binds SORL1. As to expression, expressed predominantly in lymph nodes, spleen, peripheral blood lymphocytes, bone marrow, and fetal liver.

It localises to the secreted. In terms of biological role, in complex with CRLF1, forms a heterodimeric neurotropic cytokine that plays a crucial role during neuronal development. Also stimulates B-cells. Binds to and activates the ILST/gp130 receptor. The protein is Cardiotrophin-like cytokine factor 1 (CLCF1) of Homo sapiens (Human).